The following is a 102-amino-acid chain: Small ribosomal subunit protein uS10 (102 aa).

Belongs to the universal ribosomal protein uS10 family. Part of the 30S ribosomal subunit.

In terms of biological role, involved in the binding of tRNA to the ribosomes. This is Small ribosomal subunit protein uS10 from Bartonella tribocorum (strain CIP 105476 / IBS 506).